The primary structure comprises 206 residues: Geminin (206 aa).

Polar residues predominate over residues 1-18 (MNLSMKQKQEGAQENVKN). The segment at 1-42 (MNLSMKQKQEGAQENVKNSPVPRRTLKMIQPSADGSLVGREN) is disordered. Position 27 is an N6-acetyllysine (Lys27). Phosphoserine occurs at positions 36, 63, and 64. The interval 79 to 158 (TQEAFDLISK…AEVIERLSNE (80 aa)) is necessary and sufficient for interaction with IDAS and CDT1. Positions 91-141 (PSSQYWKEVAEQRRKALYEALKENEKLHKEIEQKDSEIARLRKENKDLAEV) form a coiled coil. Residues 157-206 (NEPLDNFESPDSQEFDSEEEAVEYSELEDSGAGTCAEETVSSSTDARPCT) form a disordered region. Acidic residues predominate over residues 167–185 (DSQEFDSEEEAVEYSELED). Residues 167-187 (DSQEFDSEEEAVEYSELEDSG) form a homeodomain binding region. Position 181 is a phosphoserine; by CK2 (Ser181). The segment covering 195–206 (TVSSSTDARPCT) has biased composition (polar residues).

The protein belongs to the geminin family. As to quaternary structure, homotetramer. Interacts with CDT1; this inhibits binding of the MCM complex to origins of replication. The complex with CDT1 exists in two forms, a 'permissive' heterotrimer and an 'inhibitory' heterohexamer. Interacts (via coiled-coil domain) with IDAS (via coiled-coil domain); this targets GMNN to the nucleus. The heterodimer formed by GMNN and MCIDAS has much lower affinity for CDT1 than the GMNN homodimer. Interacts with a subset of Hox proteins, affinity increasing from anterior to posterior types, the strongest interaction being with HOXB1, HOXC9 and HOXD10. Interacts with LRWD1 from G1/S to mitosis. In terms of processing, phosphorylated during mitosis. Phosphorylation at Ser-181 by CK2 results in enhanced binding to Hox proteins and more potent inhibitory effect on Hox transcriptional activity.

Its subcellular location is the cytoplasm. It localises to the nucleus. In terms of biological role, inhibits DNA replication by preventing the incorporation of MCM complex into pre-replication complex (pre-RC). It is degraded during the mitotic phase of the cell cycle. Its destruction at the metaphase-anaphase transition permits replication in the succeeding cell cycle. Inhibits histone acetyltransferase activity of KAT7/HBO1 in a CDT1-dependent manner, inhibiting histone H4 acetylation and DNA replication licensing. Inhibits the transcriptional activity of a subset of Hox proteins, enrolling them in cell proliferative control. The polypeptide is Geminin (Gmnn) (Mus musculus (Mouse)).